The sequence spans 341 residues: tRNA N6-adenosine threonylcarbamoyltransferase (341 aa).

Residues H112 and H116 each coordinate Fe cation. Residues 134-138 (LASGG), D167, G180, and N279 contribute to the substrate site. D307 is a binding site for Fe cation.

This sequence belongs to the KAE1 / TsaD family. Fe(2+) serves as cofactor.

The protein localises to the cytoplasm. It catalyses the reaction L-threonylcarbamoyladenylate + adenosine(37) in tRNA = N(6)-L-threonylcarbamoyladenosine(37) in tRNA + AMP + H(+). Functionally, required for the formation of a threonylcarbamoyl group on adenosine at position 37 (t(6)A37) in tRNAs that read codons beginning with adenine. Is involved in the transfer of the threonylcarbamoyl moiety of threonylcarbamoyl-AMP (TC-AMP) to the N6 group of A37, together with TsaE and TsaB. TsaD likely plays a direct catalytic role in this reaction. This chain is tRNA N6-adenosine threonylcarbamoyltransferase, found in Rickettsia bellii (strain OSU 85-389).